The following is a 226-amino-acid chain: MQRILIVEDEQKTGRYLQQGLVEEGYQADLFNNGRDGLGAASKGQYDLIILDVMLPFLDGWQIISALRESGHEEPVLFLTAKDNVRDKVKGLELGADDYLIKPFDFTELVARVRTLLRRARSQAATVCTIADMTVDMVRRTVIRSGKKIHLTGKEYVLLELLLQRTGEVLPRSLISSLVWNMNFDSDTNVIDVAVRRLRSKIDDDFEPKLIHTVRGAGYVLEIREE.

The Response regulatory domain maps to 3 to 117; the sequence is RILIVEDEQK…ELVARVRTLL (115 aa). 4-aspartylphosphate is present on Asp52. Positions 125-223 form a DNA-binding region, ompR/PhoB-type; that stretch reads ATVCTIADMT…VRGAGYVLEI (99 aa).

Post-translationally, phosphorylated by PcoS.

Its subcellular location is the cytoplasm. Probable member of a two-component regulatory system PcoS/PcoR. May be involved in the activation of copper resistance gene operon pcoABCD by binding to a specific site on the cop operon promoter (copper box). This Escherichia coli protein is Transcriptional regulatory protein PcoR (pcoR).